We begin with the raw amino-acid sequence, 96 residues long: Large ribosomal subunit protein eL21 (96 aa).

This sequence belongs to the eukaryotic ribosomal protein eL21 family.

This Methanosphaerula palustris (strain ATCC BAA-1556 / DSM 19958 / E1-9c) protein is Large ribosomal subunit protein eL21.